Consider the following 546-residue polypeptide: 2-succinyl-5-enolpyruvyl-6-hydroxy-3-cyclohexene-1-carboxylate synthase (546 aa).

It belongs to the TPP enzyme family. MenD subfamily. Homodimer. Requires Mg(2+) as cofactor. It depends on Mn(2+) as a cofactor. Thiamine diphosphate serves as cofactor.

The catalysed reaction is isochorismate + 2-oxoglutarate + H(+) = 5-enolpyruvoyl-6-hydroxy-2-succinyl-cyclohex-3-ene-1-carboxylate + CO2. It functions in the pathway quinol/quinone metabolism; 1,4-dihydroxy-2-naphthoate biosynthesis; 1,4-dihydroxy-2-naphthoate from chorismate: step 2/7. The protein operates within quinol/quinone metabolism; menaquinone biosynthesis. In terms of biological role, catalyzes the thiamine diphosphate-dependent decarboxylation of 2-oxoglutarate and the subsequent addition of the resulting succinic semialdehyde-thiamine pyrophosphate anion to isochorismate to yield 2-succinyl-5-enolpyruvyl-6-hydroxy-3-cyclohexene-1-carboxylate (SEPHCHC). The sequence is that of 2-succinyl-5-enolpyruvyl-6-hydroxy-3-cyclohexene-1-carboxylate synthase from Mycolicibacterium smegmatis (strain ATCC 700084 / mc(2)155) (Mycobacterium smegmatis).